A 301-amino-acid chain; its full sequence is Amine sulfotransferase (301 aa).

A 3'-phosphoadenylyl sulfate-binding site is contributed by 46-51 (KSGTVW). Histidine 101 functions as the Proton acceptor in the catalytic mechanism. Residues arginine 123, serine 131, tyrosine 186, 220 to 225 (ATFENM), and 252 to 254 (RKG) each bind 3'-phosphoadenylyl sulfate.

It belongs to the sulfotransferase 1 family. Expressed in male liver.

The protein resides in the cytoplasm. It carries out the reaction a primary amine + 3'-phosphoadenylyl sulfate = a sulfamate + adenosine 3',5'-bisphosphate + 2 H(+). In terms of biological role, sulfotransferase that utilizes 3'-phospho-5'-adenylyl sulfate (PAPS) as sulfonate donor to catalyze the N-sulfonation of amines (PTHP, aniline, 4-chloroaniline, 2-naphthylamine). This Oryctolagus cuniculus (Rabbit) protein is Amine sulfotransferase (SULT3A1).